The sequence spans 264 residues: Thymidylate synthase (264 aa).

Residue R21 coordinates dUMP. Position 51 (H51) interacts with (6R)-5,10-methylene-5,6,7,8-tetrahydrofolate. Residue 126–127 (RR) coordinates dUMP. C146 serves as the catalytic Nucleophile. DUMP-binding positions include 166–169 (RSAD), N177, and 207–209 (HLY). D169 is a binding site for (6R)-5,10-methylene-5,6,7,8-tetrahydrofolate. A263 is a binding site for (6R)-5,10-methylene-5,6,7,8-tetrahydrofolate.

The protein belongs to the thymidylate synthase family. Bacterial-type ThyA subfamily. In terms of assembly, homodimer.

It localises to the cytoplasm. The enzyme catalyses dUMP + (6R)-5,10-methylene-5,6,7,8-tetrahydrofolate = 7,8-dihydrofolate + dTMP. The protein operates within pyrimidine metabolism; dTTP biosynthesis. Functionally, catalyzes the reductive methylation of 2'-deoxyuridine-5'-monophosphate (dUMP) to 2'-deoxythymidine-5'-monophosphate (dTMP) while utilizing 5,10-methylenetetrahydrofolate (mTHF) as the methyl donor and reductant in the reaction, yielding dihydrofolate (DHF) as a by-product. This enzymatic reaction provides an intracellular de novo source of dTMP, an essential precursor for DNA biosynthesis. The chain is Thymidylate synthase from Bartonella bacilliformis (strain ATCC 35685 / KC583 / Herrer 020/F12,63).